The chain runs to 218 residues: Uracil-DNA glycosylase (218 aa).

Asp-59 serves as the catalytic Proton acceptor.

The protein belongs to the uracil-DNA glycosylase (UDG) superfamily. UNG family.

It is found in the cytoplasm. It carries out the reaction Hydrolyzes single-stranded DNA or mismatched double-stranded DNA and polynucleotides, releasing free uracil.. Excises uracil residues from the DNA which can arise as a result of misincorporation of dUMP residues by DNA polymerase or due to deamination of cytosine. This Staphylococcus aureus (strain JH1) protein is Uracil-DNA glycosylase.